An 810-amino-acid polypeptide reads, in one-letter code: Phenylalanine--tRNA ligase beta subunit (810 aa).

One can recognise a tRNA-binding domain in the interval alanine 39–arginine 154. In terms of domain architecture, B5 spans proline 405–alanine 480. Residues aspartate 458, aspartate 464, glutamate 467, and glutamate 468 each contribute to the Mg(2+) site. The 103-residue stretch at serine 707–arginine 809 folds into the FDX-ACB domain.

Belongs to the phenylalanyl-tRNA synthetase beta subunit family. Type 1 subfamily. Tetramer of two alpha and two beta subunits. It depends on Mg(2+) as a cofactor.

It is found in the cytoplasm. The enzyme catalyses tRNA(Phe) + L-phenylalanine + ATP = L-phenylalanyl-tRNA(Phe) + AMP + diphosphate + H(+). The chain is Phenylalanine--tRNA ligase beta subunit from Burkholderia pseudomallei (strain 1710b).